Reading from the N-terminus, the 474-residue chain is Myocyte-specific enhancer factor 2C (474 aa).

Residues 3-57 form the MADS-box domain; that stretch reads RKKIQITRIMDERNRQVTFTKRKFGLMKKAYELSVLCDCEIALIIFNSTNKLFQY. K4 carries the N6-acetyllysine modification. Positions 58 to 86 form a DNA-binding region, mef2-type; sequence ASTDMDKVLLKYTEYNEPHESRTNSDIVE. S59 bears the Phosphoserine; by CK2 mark. The disordered stretch occupies residues 91 to 118; that stretch reads KGLNGCDSPDPDADDSVGHSPESEDKYR. Residues S98 and S106 each carry the phosphoserine modification. The residue at position 108 (G108) is a Phosphothreonine. S110 carries the phosphoserine modification. Residues K116 and K119 each carry the N6-acetyllysine modification. Phosphoserine occurs at positions 222 and 228. An N6-acetyllysine mark is found at K234 and K239. At S240 the chain carries Phosphoserine. N6-acetyllysine occurs at positions 252 and 264. The tract at residues 271–278 is beta domain; it reads SEDVDLLL. Residues T293 and T300 each carry the phosphothreonine; by MAPK14 modification. Positions 368 to 399 are transcription repressor; the sequence is ACTSTHLSQSSNLSLPSTQSLSIKSEPVSPPR. A compositionally biased stretch (polar residues) spans 375–390; that stretch reads SQSSNLSLPSTQSLSI. The segment at 375 to 474 is disordered; sequence SQSSNLSLPS…RMRLSEGWAT (100 aa). K391 is covalently cross-linked (Glycyl lysine isopeptide (Lys-Gly) (interchain with G-Cter in SUMO)). Position 396 is a phosphoserine; by CDK5 (S396). Phosphoserine; by MAPK7 is present on S420. The segment covering 420-433 has biased composition (low complexity); the sequence is SPVDSLSSCSSSYD. The segment covering 434–444 has biased composition (basic and acidic residues); sequence GSDREDHRNEF. At S446 the chain carries Phosphoserine.

This sequence belongs to the MEF2 family. As to quaternary structure, forms a complex with class II HDACs in undifferentiating cells. On myogenic differentiation, HDACs are released into the cytoplasm allowing MEF2s to interact with other proteins for activation. Interacts with EP300 in differentiating cells; the interaction acetylates MEF2C leading to increased DNA binding and activation. Interacts with HDAC7 and CARM1. Interacts with HDAC4, HDAC7 AND HDAC9; the interaction with HDACs represses transcriptional activity. Interacts with LPIN1. Interacts with MYOCD. Interacts with AKAP13. Interacts with FOXK1; the interaction inhibits MEF2C transactivation activity. Interacts (via N-terminus) with HABP4; this interaction decreases DNA-binding activity of MEF2C in myocardial cells in response to mechanical stress. Interacts with JPH2; interaction specifically takes place with the Junctophilin-2 N-terminal fragment cleavage product of JPH2. Interacts (via MADS box) with SOX18. Interacts with PHF7; the interaction promotes MEF2C binding to its transcription targets. Post-translationally, phosphorylation on Ser-59 enhances DNA binding activity. Phosphorylation on Ser-396 is required for Lys-391 sumoylation and inhibits transcriptional activity. In terms of processing, acetylated by p300 on several sites in diffentiating myocytes. Acetylation on Lys-4 increases DNA binding and transactivation. Sumoylated on Lys-391 with SUMO2 but not by SUMO1 represses transcriptional activity. Post-translationally, proteolytically cleaved in cerebellar granule neurons, probably by caspase 7, following neurotoxicity. Preferentially cleaves the CDK5-mediated hyperphosphorylated form which leads to neuron apoptosis and transcriptional inactivation. As to expression, widely expressed though mainly restricted to skeletal and cardiac muscle, brain, neurons and lymphocytes. Beta domain-lacking isoforms are the most predominantly expressed in all tissues including skeletal and cardiac muscle and brain. Only brain expresses all isoforms. Expression occurs primarily in the internal granule cell layer of the olfactory bulb, cortex, thalamus, hippocampus and cerebellum. Low levels in the cerebellum and hindbrain. Expressed throughout the cortex, including the frontal and entorhinal cortex, dentate gyrus, and basolateral amygdala. Selectively expressed in B-cells but not in T-cells, and its expression increases as B-cells mature.

The protein resides in the nucleus. It is found in the cytoplasm. Its subcellular location is the sarcoplasm. Its function is as follows. Transcription activator which binds specifically to the MEF2 element present in the regulatory regions of many muscle-specific genes. Controls cardiac morphogenesis and myogenesis, and is also involved in vascular development. Enhances transcriptional activation mediated by SOX18. May also be involved in neurogenesis and in the development of cortical architecture. Isoforms that lack the repressor domain are more active than isoform 1. Plays an essential role in hippocampal-dependent learning and memory by suppressing the number of excitatory synapses and thus regulating basal and evoked synaptic transmission. Crucial for normal neuronal development, distribution, and electrical activity in the neocortex. Necessary for proper development of megakaryocytes and platelets and for bone marrow B-lymphopoiesis. Required for B-cell survival and proliferation in response to BCR stimulation, efficient IgG1 antibody responses to T-cell-dependent antigens and for normal induction of germinal center B-cells. The chain is Myocyte-specific enhancer factor 2C from Mus musculus (Mouse).